The chain runs to 226 residues: Small ribosomal subunit protein uS3 (226 aa).

The KH type-2 domain occupies 39 to 107 (IRAYIKKNVV…EVTLNIKEVK (69 aa)).

This sequence belongs to the universal ribosomal protein uS3 family. In terms of assembly, part of the 30S ribosomal subunit. Forms a tight complex with proteins S10 and S14.

Its function is as follows. Binds the lower part of the 30S subunit head. Binds mRNA in the 70S ribosome, positioning it for translation. The polypeptide is Small ribosomal subunit protein uS3 (Pelagibacter ubique (strain HTCC1062)).